A 275-amino-acid chain; its full sequence is Large ribosomal subunit protein uL2 (275 aa).

Positions Asp35–Ile49 are enriched in polar residues. 2 disordered regions span residues Asp35–Lys59 and Ala224–Arg275. Positions Thr50 to Lys59 are enriched in basic residues.

This sequence belongs to the universal ribosomal protein uL2 family. Part of the 50S ribosomal subunit. Forms a bridge to the 30S subunit in the 70S ribosome.

One of the primary rRNA binding proteins. Required for association of the 30S and 50S subunits to form the 70S ribosome, for tRNA binding and peptide bond formation. It has been suggested to have peptidyltransferase activity; this is somewhat controversial. Makes several contacts with the 16S rRNA in the 70S ribosome. This chain is Large ribosomal subunit protein uL2, found in Burkholderia cenocepacia (strain HI2424).